A 364-amino-acid chain; its full sequence is DNA replication and repair protein RecF (364 aa).

Position 30–37 (30–37 (GNNGMGKT)) interacts with ATP.

Belongs to the RecF family.

It is found in the cytoplasm. In terms of biological role, the RecF protein is involved in DNA metabolism; it is required for DNA replication and normal SOS inducibility. RecF binds preferentially to single-stranded, linear DNA. It also seems to bind ATP. The polypeptide is DNA replication and repair protein RecF (Porphyromonas gingivalis (strain ATCC 33277 / DSM 20709 / CIP 103683 / JCM 12257 / NCTC 11834 / 2561)).